We begin with the raw amino-acid sequence, 92 residues long: Large ribosomal subunit protein uL23c (92 aa).

This sequence belongs to the universal ribosomal protein uL23 family. As to quaternary structure, part of the 50S ribosomal subunit.

It is found in the plastid. Its subcellular location is the chloroplast. Functionally, binds to 23S rRNA. The sequence is that of Large ribosomal subunit protein uL23c (rpl23) from Mesostigma viride (Green alga).